Consider the following 574-residue polypeptide: Proline--tRNA ligase (574 aa).

The protein belongs to the class-II aminoacyl-tRNA synthetase family. ProS type 1 subfamily. In terms of assembly, homodimer.

The protein localises to the cytoplasm. It catalyses the reaction tRNA(Pro) + L-proline + ATP = L-prolyl-tRNA(Pro) + AMP + diphosphate. Its function is as follows. Catalyzes the attachment of proline to tRNA(Pro) in a two-step reaction: proline is first activated by ATP to form Pro-AMP and then transferred to the acceptor end of tRNA(Pro). As ProRS can inadvertently accommodate and process non-cognate amino acids such as alanine and cysteine, to avoid such errors it has two additional distinct editing activities against alanine. One activity is designated as 'pretransfer' editing and involves the tRNA(Pro)-independent hydrolysis of activated Ala-AMP. The other activity is designated 'posttransfer' editing and involves deacylation of mischarged Ala-tRNA(Pro). The misacylated Cys-tRNA(Pro) is not edited by ProRS. The sequence is that of Proline--tRNA ligase from Ralstonia pickettii (strain 12J).